A 309-amino-acid polypeptide reads, in one-letter code: MVGFKATDVPPTATVKFLGAGTAACIADLITFPLDTAKVRLQIQGERQGPVRAAASAQYRGVLCTILTMVRTEGPRSLYSGLVAGLQRQMSFASVRIGLYDSVKQFYTKGSEHAGIGSRLLAGSTTGALAVAVAQPTDVVKVRFQAQARAGSGRRYQSTVDAYKTIAREEGFRGLWKGTSPNVARNAIVNCAELVTYDLIKDALLKANLMTDDLPCHFTSAFGAGFCTTVIASPVDVVKTRYMNSALGQYSSAGHCALTMLQKEGPRAFYKGFMPSFLRLGSWNVVMFVTYEQLKRALMAACTSREAPF.

Topologically, residues 1–16 (MVGFKATDVPPTATVK) are mitochondrial intermembrane. Solcar repeat units follow at residues 11–106 (PTAT…VKQF), 114–203 (AGIG…IKDA), and 212–297 (DDLP…LKRA). The important for interaction with long-chain fatty acids stretch occupies residues 16–63 (KFLGAGTAACIADLITFPLDTAKVRLQIQGERQGPVRAAASAQYRGVL). A helical membrane pass occupies residues 17-40 (FLGAGTAACIADLITFPLDTAKVR). The Mitochondrial matrix segment spans residues 41 to 77 (LQIQGERQGPVRAAASAQYRGVLCTILTMVRTEGPRS). A helical transmembrane segment spans residues 78 to 103 (LYSGLVAGLQRQMSFASVRIGLYDSV). Residues 104 to 119 (KQFYTKGSEHAGIGSR) are Mitochondrial intermembrane-facing. Residues 120 to 145 (LLAGSTTGALAVAVAQPTDVVKVRFQ) traverse the membrane as a helical segment. Residues 146–173 (AQARAGSGRRYQSTVDAYKTIAREEGFR) lie on the Mitochondrial matrix side of the membrane. The helical transmembrane segment at 174–199 (GLWKGTSPNVARNAIVNCAELVTYDL) threads the bilayer. At 200–217 (IKDALLKANLMTDDLPCH) the chain is on the mitochondrial intermembrane side. A helical membrane pass occupies residues 218-242 (FTSAFGAGFCTTVIASPVDVVKTRY). Residues 243 to 268 (MNSALGQYSSAGHCALTMLQKEGPRA) lie on the Mitochondrial matrix side of the membrane. The chain crosses the membrane as a helical span at residues 269-294 (FYKGFMPSFLRLGSWNVVMFVTYEQL). Residues 278–285 (LRLGSWNV) form an important for interaction with long-chain fatty acids region. Residues 295–309 (KRALMAACTSREAPF) are Mitochondrial intermembrane-facing.

It belongs to the mitochondrial carrier (TC 2.A.29) family. As to quaternary structure, homotetramer. Adopts an asymmetrical dimer of dimers functional form. Interacts with MICU1 (when methylated); leading to decrease the calcium sensitivity of MICU1.

It localises to the mitochondrion inner membrane. It carries out the reaction L-aspartate(out) + phosphate(in) + H(+)(in) = L-aspartate(in) + phosphate(out) + H(+)(out). It catalyses the reaction oxaloacetate(out) + phosphate(in) + H(+)(in) = oxaloacetate(in) + phosphate(out) + H(+)(out). The catalysed reaction is (S)-malate(out) + phosphate(in) + H(+)(in) = (S)-malate(in) + phosphate(out) + H(+)(out). The enzyme catalyses malonate(out) + phosphate(in) + H(+)(in) = malonate(in) + phosphate(out) + H(+)(out). It carries out the reaction sulfate(out) + phosphate(in) + H(+)(in) = sulfate(in) + phosphate(out) + H(+)(out). It catalyses the reaction (S)-malate(out) = (S)-malate(in). The catalysed reaction is L-aspartate(out) = L-aspartate(in). The enzyme catalyses phosphate(in) = phosphate(out). It carries out the reaction chloride(in) = chloride(out). It catalyses the reaction H(+)(in) = H(+)(out). The catalysed reaction is a long-chain fatty acid(out) = a long-chain fatty acid(in). Its function is as follows. Antiporter that exports dicarboxylate intermediates of the Krebs cycle in exchange for phosphate plus a proton across the inner membrane of mitochondria, a process driven by mitochondrial motive force with an overall impact on glycolysis, glutaminolysis and glutathione-dependent redox balance. Continuous export of oxaloacetate and related four-carbon dicarboxylates from mitochondrial matrix into the cytosol negatively regulates the oxidation of acetyl-CoA substrates via the Krebs cycle lowering the ATP/ADP ratio and reactive oxygen species (ROS) production. May mediate inducible proton entry into the mitochondrial matrix affecting ATP turnover as a protection mechanism against oxidative stress. The proton currents are most likely associated with fatty acid flipping across the inner membrane of mitochondria in a metabolic process regulated by free fatty acids and purine nucleotides. Regulates the use of glucose as a source of energy. Required for glucose-induced DRP1-dependent mitochondrial fission and neuron activation in the ventromedial nucleus of the hypothalamus (VMH). This mitochondrial adaptation mechanism modulates the VMH pool of glucose-excited neurons with an impact on systemic glucose homeostasis. Regulates ROS levels and metabolic reprogramming of macrophages during the resolution phase of inflammation. Attenuates ROS production in response to IL33 to preserve the integrity of the Krebs cycle required for persistent production of itaconate and subsequent GATA3-dependent differentiation of inflammation-resolving alternatively activated macrophages. Can unidirectionally transport anions including L-malate, L-aspartate, phosphate and chloride ions. Does not mediate adaptive thermogenesis. The sequence is that of Dicarboxylate carrier UCP2 (UCP2) from Canis lupus familiaris (Dog).